A 204-amino-acid polypeptide reads, in one-letter code: Threonylcarbamoyl-AMP synthase (204 aa).

Residues 10–204 enclose the YrdC-like domain; that stretch reads ADELDLVANY…KDLLAGHILR (195 aa).

The protein belongs to the SUA5 family. TsaC subfamily.

It is found in the cytoplasm. The catalysed reaction is L-threonine + hydrogencarbonate + ATP = L-threonylcarbamoyladenylate + diphosphate + H2O. In terms of biological role, required for the formation of a threonylcarbamoyl group on adenosine at position 37 (t(6)A37) in tRNAs that read codons beginning with adenine. Catalyzes the conversion of L-threonine, HCO(3)(-)/CO(2) and ATP to give threonylcarbamoyl-AMP (TC-AMP) as the acyladenylate intermediate, with the release of diphosphate. The protein is Threonylcarbamoyl-AMP synthase of Moraxella catarrhalis (strain BBH18).